The primary structure comprises 478 residues: MSIRVTQKSYKVSTSAPRSFSSRSYTSGPGSRISSSAFSRVGSSSSFRGGLGTGMSMAGSYGGAPGLGGITAVTVNQSLLSPLKLEVDPNIQAVRTQEKEQIKTLNNKFASFIDKVRHLEQQNKVLETKWNLLQQQKTARSNIDNMFESYINNLRRQLETLAQEKLKLEVELGNMQGLVEDFKTKYEDEIQKRTDMENEFVIIKKDVDEAYMNKVELESRLEGLTDEINFYRQLYEEEIREMQSQISDTSVVLEMDNNRNLDLDGIIAEVKAQYEEIANRSRAEAEAMYQIKYEELQTLAGKHGDDLRRTKTEISEMNRNINRLQAEIEGLKGQRASLEAAIADAEQRGEMAVKDAQAKLAELEAALRNAKQDMARQLREYQELMNVKLALDVEIATYRKLLEGEESRLESGMQNMSIHTKTTSGYAGGLTSSYGTPGFNYSLSPGSFSRTSSKPVVVKKIETRDGKLVSESSDVLSK.

Positions 1–97 (MSIRVTQKSY…DPNIQAVRTQ (97 aa)) are head. Phosphoserine; by PKC/PRKCE is present on Ser-9. Residue Lys-11 forms a Glycyl lysine isopeptide (Lys-Gly) (interchain with G-Cter in SUMO2) linkage. Ser-13, Ser-15, Ser-21, and Ser-22 each carry phosphoserine. The tract at residues 16–44 (APRSFSSRSYTSGPGSRISSSAFSRVGSS) is disordered. Omega-N-methylarginine is present on Arg-23. Position 24 is a phosphoserine; by PKC/PRKCE (Ser-24). Residue Thr-26 is modified to Phosphothreonine. Residues Ser-27 and Ser-31 each carry the phosphoserine modification. Arg-32 carries the omega-N-methylarginine modification. 2 positions are modified to phosphoserine: Ser-34 and Ser-39. At Arg-40 the chain carries Omega-N-methylarginine. 2 positions are modified to phosphoserine: Ser-43 and Ser-44. The residue at position 48 (Arg-48) is an Asymmetric dimethylarginine; alternate. Arg-48 carries the omega-N-methylarginine; alternate modification. The residue at position 81 (Ser-81) is a Phosphoserine; by MAPK. The coil 1A stretch occupies residues 98 to 133 (EKEQIKTLNNKFASFIDKVRHLEQQNKVLETKWNLL). The IF rod domain maps to 98-409 (EKEQIKTLNN…KLLEGEESRL (312 aa)). An N6-malonyllysine modification is found at Lys-108. Glycyl lysine isopeptide (Lys-Gly) (interchain with G-Cter in SUMO2) cross-links involve residues Lys-129 and Lys-137. The interval 134-150 (QQQKTARSNIDNMFESY) is linker 1. The segment at 151–242 (INNLRRQLET…QLYEEEIREM (92 aa)) is coil 1B. Residue Lys-204 forms a Glycyl lysine isopeptide (Lys-Gly) (interchain with G-Cter in SUMO1); alternate linkage. Residue Lys-204 forms a Glycyl lysine isopeptide (Lys-Gly) (interchain with G-Cter in SUMO2); alternate linkage. Lys-214 is modified (N6-acetyllysine). At Tyr-235 the chain carries Phosphotyrosine. A linker 12 region spans residues 243-266 (QSQISDTSVVLEMDNNRNLDLDGI). The segment at 267-405 (IAEVKAQYEE…ATYRKLLEGE (139 aa)) is coil 2. The necessary for interaction with PNN stretch occupies residues 268-389 (AEVKAQYEEI…EYQELMNVKL (122 aa)). Lys-271 participates in a covalent cross-link: Glycyl lysine isopeptide (Lys-Gly) (interchain with G-Cter in SUMO2). Ser-281 carries the post-translational modification Phosphoserine. Lys-292 participates in a covalent cross-link: Glycyl lysine isopeptide (Lys-Gly) (interchain with G-Cter in SUMO2). Residue Lys-302 forms a Glycyl lysine isopeptide (Lys-Gly) (interchain with G-Cter in SUMO2); alternate linkage. Residue Lys-302 is modified to N6-acetyllysine; alternate. Lys-311 participates in a covalent cross-link: Glycyl lysine isopeptide (Lys-Gly) (interchain with G-Cter in SUMO2). Residue Lys-332 forms a Glycyl lysine isopeptide (Lys-Gly) (interchain with G-Cter in SUMO2); alternate linkage. Lys-332 bears the N6-acetyllysine; alternate mark. At Ser-337 the chain carries Phosphoserine. Lys-400 participates in a covalent cross-link: Glycyl lysine isopeptide (Lys-Gly) (interchain with G-Cter in SUMO2). Positions 406–478 (ESRLESGMQN…VSESSDVLSK (73 aa)) are tail. A phosphoserine mark is found at Ser-407, Ser-411, Ser-417, Ser-424, and Ser-433. Lys-467 is covalently cross-linked (Glycyl lysine isopeptide (Lys-Gly) (interchain with G-Cter in SUMO1); alternate). Lys-467 participates in a covalent cross-link: Glycyl lysine isopeptide (Lys-Gly) (interchain with G-Cter in SUMO2); alternate. A phosphoserine mark is found at Ser-470, Ser-472, Ser-473, and Ser-477.

This sequence belongs to the intermediate filament family. As to quaternary structure, heterotetramer of two type I and two type II keratins. Forms a heterodimer with KRT18. Associates with KRT20. Interacts with PNN. When associated with KRT19, interacts with DMD. Interacts with TCHP. Interacts with APEX1. Interacts with GPER1. Interacts with EPPK1. Interacts with PKP1 and PKP2. Post-translationally, O-glycosylated. O-GlcNAcylation at multiple sites increases solubility, and decreases stability by inducing proteasomal degradation. O-glycosylated (O-GlcNAcylated), in a cell cycle-dependent manner. As to expression, expressed in bladder, liver, exocervix and (in very low amounts) esophagus.

Its subcellular location is the cytoplasm. It localises to the nucleus. The protein localises to the nucleoplasm. It is found in the nucleus matrix. Its function is as follows. Together with KRT19, helps to link the contractile apparatus to dystrophin at the costameres of striated muscle. The sequence is that of Keratin, type II cytoskeletal 8 (KRT8) from Bos taurus (Bovine).